Here is a 36-residue protein sequence, read N- to C-terminus: Photosystem I reaction center subunit VIII (36 aa).

The helical transmembrane segment at Ser-8–Leu-28 threads the bilayer.

Belongs to the PsaI family.

It localises to the plastid. The protein resides in the chloroplast thylakoid membrane. Its function is as follows. May help in the organization of the PsaL subunit. In Jasminum nudiflorum (Winter jasmine), this protein is Photosystem I reaction center subunit VIII.